The sequence spans 106 residues: Putative protein LRRC37A5P (106 aa).

The protein is Putative protein LRRC37A5P (LRRC37A5P) of Homo sapiens (Human).